Consider the following 1503-residue polypeptide: Lysine-specific demethylase 5B-B (1503 aa).

Residues 15 to 56 (CPVFEPSWEEFKDPFAFINKIRPIAEKTGICKVRPPPDWQPP) form the JmjN domain. In terms of domain architecture, ARID spans 80–170 (TRVKLNFLDQ…ILYPYNLFQS (91 aa)). Polar residues predominate over residues 202 to 211 (VPLQPSNTSA). Disordered regions lie at residues 202-223 (VPLQ…KTES) and 268-287 (IKEL…NIPP). The segment covering 268–278 (IKELNPEPEKS) has biased composition (basic and acidic residues). The PHD-type 1 zinc-finger motif lies at 295 to 345 (LYVCLVCGKGNDEDRLLLCDGCDDSYHTFCLIPPLTDVPKGDWRCPKCLTQ). Residues 439–605 (KYLQCGWNLN…LGRQCVDHYR (167 aa)) form the JmjC domain. Fe cation is bound by residues H485, D488, and H573. The segment at 1168–1216 (LKVCVCQKPAMGAMLQCELCRDAFHSVCVRGPSDPLDPEAWLCPLCLRS) adopts a PHD-type 2 zinc-finger fold. 2 disordered regions span residues 1362–1381 (TNTS…TETD) and 1403–1442 (ERGT…DSEE). The segment at 1444-1497 (MTLCPAESCLQPEGEEVDWVQCDCCNRWFHMICVGVSAELAAEEDYMCVSCSTS) adopts a PHD-type 3 zinc-finger fold.

Belongs to the JARID1 histone demethylase family. The cofactor is Fe(2+).

It localises to the nucleus. The enzyme catalyses N(6),N(6),N(6)-trimethyl-L-lysyl(4)-[histone H3] + 3 2-oxoglutarate + 3 O2 = L-lysyl(4)-[histone H3] + 3 formaldehyde + 3 succinate + 3 CO2. Its function is as follows. Histone demethylase that demethylates 'Lys-4' of histone H3, thereby playing a central role in histone code. Does not demethylate histone H3 'Lys-9' or H3 'Lys-27'. Demethylates trimethylated, dimethylated and monomethylated H3 'Lys-4'. Acts as a transcriptional corepressor. The chain is Lysine-specific demethylase 5B-B (kdm5bb) from Danio rerio (Zebrafish).